The chain runs to 648 residues: MLHPRVIRLRFACKLTLAIVLSLLLGFYFGLQTPRWSALTAALVAAGPAFAAGGEPFAGAIRYRGWLRIIGTVLGSLCALLLMMLLIRAPLLMILLCCLWAGVCTWLSSLVRMENAYALGLSGYTALIIVVSCLGEPQFILQLALERCGEIVLGIACAVLADTLLAPRSVKGEVDRVVGGMLLGQLCLLQRCVDGRDSDAVDRSWHGLIRESHTLEGMRASLALESSRWPRACRRLAALHTLSLTLITRACEIFLTQRQTPTALPAPFLTLIAAPVKTPAEAYQRLKQLRRLLAAHGGHQLPPALIGWIDGASQLQLLAKGVASNVRIGRHEAAILAHDAAPRQIYSAQGHHALINGLRTWLATSLGALFWLWSGWNAGSGCMIMIAVVTSLAVRTPNPRMAAIDFLMGSLVALPVGALYYTVILPATQQSLVLLCLSLGALTFICGMEVQKRRLGSLGTLASTLNILVLSNPMRFPIESFVDSAIGQVIGCLLALVVLLAVRDRSRARTGRTLMRRLAFGAVAALRGEGTRGNLLPALYRQLFLLLTLFPDDIGRYRLALTLIVLQQRLAHSALPCDAERLRAIDAAATRLLTGRGAARRRGALLQLTTGLSDYADALVRQGAAGAALQPLHQLADVLHRYRGVLLG.

A run of 11 helical transmembrane segments spans residues 11–31 (FACK…YFGL), 41–61 (AALV…AGAI), 65–87 (GWLR…MLLI), 91–110 (LLMI…LSSL), 125–145 (TALI…QLAL), 150–170 (EIVL…PRSV), 369–389 (LFWL…IAVV), 406–426 (FLMG…VILP), 430–450 (QSLV…GMEV), 455–474 (LGSL…SNPM), and 481–501 (FVDS…VLLA).

Belongs to the aromatic acid exporter ArAE (TC 2.A.85) family.

It localises to the cell inner membrane. Its function is as follows. Forms an efflux pump with AaeA. Could function as a metabolic relief valve, allowing to eliminate certain compounds when they accumulate to high levels in the cell. The protein is p-hydroxybenzoic acid efflux pump subunit AaeB (aaeB) of Edwardsiella tarda (strain FL6-60).